The sequence spans 143 residues: Subtelomeric hrmA-associated cluster protein cgnA (143 aa).

29 G-Q-I/R/S repeats span residues 11 to 13, 14 to 16, 17 to 19, 20 to 22, 23 to 25, 26 to 28, 29 to 31, 32 to 34, 35 to 37, 38 to 40, 41 to 43, 44 to 46, 47 to 49, 50 to 52, 53 to 55, 56 to 58, 59 to 61, 62 to 64, 65 to 67, 68 to 70, 71 to 73, 74 to 76, 77 to 79, 80 to 82, 83 to 85, 86 to 88, 89 to 91, 92 to 94, and 95 to 97; these read GQI, GPI, GQR, GQS, and GQA. The region spanning 11-68 is the Collagen-like domain; it reads GQIGPIGQRGQSGQRGQSGQRGQSGQIGQSGQSGQSGQIGQIGQIGQIGQIGQIGQIG. A 29 X 3 AA approximate tandem repeats of G-Q-I/R/S region spans residues 11–97; the sequence is GQIGPIGQRG…IGQIGQIGQA (87 aa). A disordered region spans residues 16-49; it reads IGQRGQSGQRGQSGQRGQSGQIGQSGQSGQSGQI.

It localises to the secreted. In terms of biological role, collagen-like protein; part of the subtelomeric hrmA-associated cluster (HAC) containing genes that alter the hyphal surface (such as reduced total chitin or increased beta-glucan exposure) and perturb inter-hyphal interactions within the developing biofilms, resulting in a loss of vertically aligned polarized growing filaments. Consequently, this hypoxia-typic morphotype (called H-MORPH) with altered biofilm architecture leads to increased hypoxia fitness, increased host inflammation, rapid disease progression, and mortality in a murine model of invasive aspergillosis. CgnA is directly involved in the reduction of total surface chitin and the increase of beta-glucan exposure, and mediates the detachment of the extracellular matrix and especially of its component galactosaminogalactan (GAG). The chain is Subtelomeric hrmA-associated cluster protein cgnA from Aspergillus fumigatus (strain ATCC MYA-4609 / CBS 101355 / FGSC A1100 / Af293) (Neosartorya fumigata).